Consider the following 161-residue polypeptide: Cyclic pyranopterin monophosphate synthase (161 aa).

Substrate-binding positions include 78–80 (LCH) and 116–117 (ME). The active site involves D131.

It belongs to the MoaC family. Homohexamer; trimer of dimers.

The enzyme catalyses (8S)-3',8-cyclo-7,8-dihydroguanosine 5'-triphosphate = cyclic pyranopterin phosphate + diphosphate. It functions in the pathway cofactor biosynthesis; molybdopterin biosynthesis. Its function is as follows. Catalyzes the conversion of (8S)-3',8-cyclo-7,8-dihydroguanosine 5'-triphosphate to cyclic pyranopterin monophosphate (cPMP). The polypeptide is Cyclic pyranopterin monophosphate synthase (Bordetella pertussis (strain Tohama I / ATCC BAA-589 / NCTC 13251)).